The chain runs to 333 residues: MAGKVILDFEKPLFELEAKLEEMRVCLRGSAREQDQQDADMLHRDIALLEQKVDALRRSIYKNLTRWQKVQLARHPERPYTLDYIYMMTRDFVELSGDRHFKDDKAIVGGFARLEESASGFSQTVMMIGHQKGRDTKSNLYRNFGMAQPEGYRKALRLMKLAEKFRKPVITLIDTPGAFPGIEAEERGQAEAIARNLFEMARLSVPIICVIIGEGASGGAIGIGVGDRVFMAENSWYSVISPESCSSILWRSWNYKEQAAEALKLTADDLLRQGIIDRIVPEPLGGAHTEPEAMAGTLKEMLVEELRDLMSKESDVLVRERVDKFSGMGVWDE.

The 261-residue stretch at 48-308 (LLEQKVDALR…KEMLVEELRD (261 aa)) folds into the CoA carboxyltransferase C-terminal domain.

It belongs to the AccA family. As to quaternary structure, acetyl-CoA carboxylase is a heterohexamer composed of biotin carboxyl carrier protein (AccB), biotin carboxylase (AccC) and two subunits each of ACCase subunit alpha (AccA) and ACCase subunit beta (AccD).

The protein localises to the cytoplasm. It carries out the reaction N(6)-carboxybiotinyl-L-lysyl-[protein] + acetyl-CoA = N(6)-biotinyl-L-lysyl-[protein] + malonyl-CoA. It participates in lipid metabolism; malonyl-CoA biosynthesis; malonyl-CoA from acetyl-CoA: step 1/1. Component of the acetyl coenzyme A carboxylase (ACC) complex. First, biotin carboxylase catalyzes the carboxylation of biotin on its carrier protein (BCCP) and then the CO(2) group is transferred by the carboxyltransferase to acetyl-CoA to form malonyl-CoA. The chain is Acetyl-coenzyme A carboxylase carboxyl transferase subunit alpha from Chlorobium limicola (strain DSM 245 / NBRC 103803 / 6330).